The following is a 162-amino-acid chain: NADH-quinone oxidoreductase subunit I (162 aa).

2 4Fe-4S ferredoxin-type domains span residues 52–82 (LRRY…IEAG) and 93–122 (VRYD…EGPN). C62, C65, C68, C72, C102, C105, C108, and C112 together coordinate [4Fe-4S] cluster.

The protein belongs to the complex I 23 kDa subunit family. As to quaternary structure, NDH-1 is composed of 14 different subunits. Subunits NuoA, H, J, K, L, M, N constitute the membrane sector of the complex. [4Fe-4S] cluster serves as cofactor.

Its subcellular location is the cell inner membrane. The catalysed reaction is a quinone + NADH + 5 H(+)(in) = a quinol + NAD(+) + 4 H(+)(out). Functionally, NDH-1 shuttles electrons from NADH, via FMN and iron-sulfur (Fe-S) centers, to quinones in the respiratory chain. The immediate electron acceptor for the enzyme in this species is believed to be ubiquinone. Couples the redox reaction to proton translocation (for every two electrons transferred, four hydrogen ions are translocated across the cytoplasmic membrane), and thus conserves the redox energy in a proton gradient. The chain is NADH-quinone oxidoreductase subunit I from Nitrobacter hamburgensis (strain DSM 10229 / NCIMB 13809 / X14).